A 275-amino-acid chain; its full sequence is Phosphate import ATP-binding protein PstB (275 aa).

The region spanning 28-270 (MSAKNVSVFY…PREERTKDYI (243 aa)) is the ABC transporter domain. 60 to 67 (GPSGCGKS) contacts ATP.

This sequence belongs to the ABC transporter superfamily. Phosphate importer (TC 3.A.1.7) family. In terms of assembly, the complex is composed of two ATP-binding proteins (PstB), two transmembrane proteins (PstC and PstA) and a solute-binding protein (PstS).

Its subcellular location is the cell inner membrane. It carries out the reaction phosphate(out) + ATP + H2O = ADP + 2 phosphate(in) + H(+). Its function is as follows. Part of the ABC transporter complex PstSACB involved in phosphate import. Responsible for energy coupling to the transport system. This is Phosphate import ATP-binding protein PstB from Novosphingobium aromaticivorans (strain ATCC 700278 / DSM 12444 / CCUG 56034 / CIP 105152 / NBRC 16084 / F199).